A 368-amino-acid chain; its full sequence is Propane 2-monooxygenase, hydroxylase component small subunit (368 aa).

This sequence belongs to the TmoE/XamoE family. The propane 2-monooxygenase multicomponent enzyme system is composed of an electron transfer component and a monooxygenase component interacting with the effector protein PrmD. The electron transfer component is composed of a reductase (PrmB), and the monooxygenase component is formed by a large subunit (PrmA) and a small subunit (PrmC). Probably requires the presence of the chaperonin-like protein PrmG to ensure a productive folding, resulting of a soluble PrmC, which leads to the active form of PrmABCD.

The catalysed reaction is propane + NADH + O2 + H(+) = propan-2-ol + NAD(+) + H2O. Its function is as follows. Component of the propane 2-monooxygenase multicomponent enzyme system which is involved in the degradation of propane via the O2-dependent hydroxylation of propane. Also able to catalyze the oxidation the water contaminant N-nitrosodimethylamine (NDMA). This chain is Propane 2-monooxygenase, hydroxylase component small subunit, found in Rhodococcus jostii (strain RHA1).